Consider the following 441-residue polypeptide: Proline--tRNA ligase (441 aa).

The protein belongs to the class-II aminoacyl-tRNA synthetase family. ProS type 2 subfamily. In terms of assembly, homodimer.

The protein resides in the cytoplasm. The catalysed reaction is tRNA(Pro) + L-proline + ATP = L-prolyl-tRNA(Pro) + AMP + diphosphate. Catalyzes the attachment of proline to tRNA(Pro) in a two-step reaction: proline is first activated by ATP to form Pro-AMP and then transferred to the acceptor end of tRNA(Pro). The sequence is that of Proline--tRNA ligase from Bartonella henselae (strain ATCC 49882 / DSM 28221 / CCUG 30454 / Houston 1) (Rochalimaea henselae).